A 90-amino-acid chain; its full sequence is Probable Fe(2+)-trafficking protein (90 aa).

The protein belongs to the Fe(2+)-trafficking protein family.

In terms of biological role, could be a mediator in iron transactions between iron acquisition and iron-requiring processes, such as synthesis and/or repair of Fe-S clusters in biosynthetic enzymes. This Paraburkholderia xenovorans (strain LB400) protein is Probable Fe(2+)-trafficking protein.